Reading from the N-terminus, the 502-residue chain is Arabinose import ATP-binding protein AraG (502 aa).

ABC transporter domains follow at residues 5–240 and 253–496; these read LEFS…MVGR and LGGI…LPDK. Position 37–44 (37–44) interacts with ATP; the sequence is GENGAGKS.

This sequence belongs to the ABC transporter superfamily. Arabinose importer (TC 3.A.1.2.2) family. In terms of assembly, the complex is composed of two ATP-binding proteins (AraG), two transmembrane proteins (AraH) and a solute-binding protein (AraF).

Its subcellular location is the cell inner membrane. The catalysed reaction is L-arabinose(out) + ATP + H2O = L-arabinose(in) + ADP + phosphate + H(+). Its function is as follows. Part of the ABC transporter complex AraFGH involved in arabinose import. Responsible for energy coupling to the transport system. In Rhizobium johnstonii (strain DSM 114642 / LMG 32736 / 3841) (Rhizobium leguminosarum bv. viciae), this protein is Arabinose import ATP-binding protein AraG.